A 334-amino-acid polypeptide reads, in one-letter code: Peroxidase 65 (334 aa).

A signal peptide spans 1 to 28; that stretch reads MSNMQFSRGFNPFVILFCLAVVAPIISA. Cystine bridges form between Cys42/Cys123, Cys75/Cys80, Cys129/Cys326, and Cys208/Cys236. His73 (proton acceptor) is an active-site residue. Residues Asp74, Gly79, Asp81, and Ser83 each coordinate Ca(2+). Pro171 is a binding site for substrate. Asn174 carries N-linked (GlcNAc...) asparagine glycosylation. Heme b is bound at residue His201. Thr202 lines the Ca(2+) pocket. Asn238 is a glycosylation site (N-linked (GlcNAc...) asparagine). Ca(2+)-binding residues include Asp250, Thr253, and Asp258. N-linked (GlcNAc...) asparagine glycans are attached at residues Asn282 and Asn294.

Belongs to the peroxidase family. Classical plant (class III) peroxidase subfamily. Requires heme b as cofactor. Ca(2+) is required as a cofactor.

The protein resides in the secreted. The enzyme catalyses 2 a phenolic donor + H2O2 = 2 a phenolic radical donor + 2 H2O. Removal of H(2)O(2), oxidation of toxic reductants, biosynthesis and degradation of lignin, suberization, auxin catabolism, response to environmental stresses such as wounding, pathogen attack and oxidative stress. These functions might be dependent on each isozyme/isoform in each plant tissue. The polypeptide is Peroxidase 65 (PER65) (Arabidopsis thaliana (Mouse-ear cress)).